Here is a 635-residue protein sequence, read N- to C-terminus: MHGLLLAAGLLSLPLHVLAHPQPSTSTSLAGRAGAVDLNEFRVAHRSSYTSHDEMKKLPSIASFRQGTYLEVATELVKQTMPNMEFRLVDDHYVGDSGIGHVRFRQTMHGIDIDNSDFNVNVGKNGKVLSHGNSFYTGPAPASNPMVKRDFIDPMQALNGVRKALNLPVKADGAHVENMSEHKVMFKGTSGALSDPTAKLCYMAKEDGSLALTWRVETDIGDNWLLSYMDAKESSKVHNVVDYVAHATFQVYKWGLADPTEGKRDILTNPWNLKTSPLTWLADGKTNFTATRGNNAIAQYNPDGGNDYENNYRPSPKNLKFEYPYSPDMNPPKTYIDASVTQLFYTSNVCHDLYYMLGFNEKAGNFQVNNRGQGGKGNDYVILNAQDGSGTNNANFATPPDGQPGRMRAYIWTRANPPRDASFEAGTIIHEYTHGLSNRLCGGPANSRCLNALESGGMGEGWGDFYATAVRLKPNDTRKTNYVKGGWVNNSPKGVRMYPYSTDMNVNPLVYTSNNKLNEVHAIGTVWCTMLYEVLWNLIDKHGKNDGPVPVFENGVPNDGKYLAMKLVMDGMAIQPCNPNFVQARDAILDADMNLTKGANKCEIWKGFAKRGLGVGAKFDPKNRTGSNQVPNECK.

A signal peptide spans 1–19 (MHGLLLAAGLLSLPLHVLA). The propeptide occupies 20–246 (HPQPSTSTSL…VHNVVDYVAH (227 aa)). Residue Asn-287 is glycosylated (N-linked (GlcNAc...) asparagine). His-430 provides a ligand contact to Zn(2+). The active site involves Glu-431. His-434 is a binding site for Zn(2+). Asn-475, Asn-594, and Asn-623 each carry an N-linked (GlcNAc...) asparagine glycan.

Belongs to the peptidase M36 family. It depends on Zn(2+) as a cofactor.

The protein localises to the secreted. Its function is as follows. Secreted metalloproteinase probably acting as a virulence factor. The sequence is that of Extracellular metalloproteinase 1 (MEP1) from Arthroderma benhamiae (Trichophyton mentagrophytes).